The chain runs to 372 residues: PqqA peptide cyclase (372 aa).

A Radical SAM core domain is found at 4–219 (APPPLSVLLE…VDTARRELGD (216 aa)). [4Fe-4S] cluster-binding residues include cysteine 18, cysteine 22, and cysteine 25. A disordered region spans residues 342 to 372 (ATAEREAAAPAPEFIYRRPERPAPATADTLE).

It belongs to the radical SAM superfamily. PqqE family. As to quaternary structure, interacts with PqqD. The interaction is necessary for activity of PqqE. Requires [4Fe-4S] cluster as cofactor.

The catalysed reaction is [PQQ precursor protein] + S-adenosyl-L-methionine = E-Y cross-linked-[PQQ precursor protein] + 5'-deoxyadenosine + L-methionine + H(+). It functions in the pathway cofactor biosynthesis; pyrroloquinoline quinone biosynthesis. Functionally, catalyzes the cross-linking of a glutamate residue and a tyrosine residue in the PqqA protein as part of the biosynthesis of pyrroloquinoline quinone (PQQ). The protein is PqqA peptide cyclase of Xanthomonas oryzae pv. oryzae (strain MAFF 311018).